Here is a 286-residue protein sequence, read N- to C-terminus: MRYLLFVTVLWAFSFNLIGEYLAGQVDSYFAVLTRVLLAGLVFLPLTRWRGVEPRFVGGVMLVGALQFGITYVCLYLSFNVLTVPEVLLFTVLTPVHVALFDDLLNRRFNFWALAAALVAVLGAAIIRYDGITGEFLQGFLLLQLANATFAAGQVLYKRLVRKYPSELPQRQRFGYFFVGALLVALPAWLLFGDPQRLPAGELQWGVLVWMGLLATALGQFWWNKGATEVDAGTLAVMNNLHVPVGLLLNLLIWNQHADLPRLALGGAVIVASLWVNRLGRREVRA.

EamA domains are found at residues Y3–R128 and G139–N277. A run of 10 helical transmembrane segments spans residues L4 to G24, V26 to L46, F56 to Y76, V81 to F101, F109 to Y129, F136 to L156, F174 to D194, L203 to W223, T234 to W254, and A258 to G280.

This sequence belongs to the drug/metabolite transporter (DMT) superfamily. 10 TMS drug/metabolite exporter (DME) (TC 2.A.7.3) family.

It is found in the cell inner membrane. It carries out the reaction biotin(in) = biotin(out). Functionally, uptake of biotin. In Pseudomonas aeruginosa (strain ATCC 15692 / DSM 22644 / CIP 104116 / JCM 14847 / LMG 12228 / 1C / PRS 101 / PAO1), this protein is Probable biotin transporter.